Here is a 368-residue protein sequence, read N- to C-terminus: D-Ala-D/L-Ala epimerase (368 aa).

Substrate contacts are provided by residues Thr-135 and 160–162 (KVK). The Mg(2+) site is built by Asp-190, Glu-216, and Asp-241. Substrate contacts are provided by residues Lys-265 and 318–320 (DFD).

It belongs to the mandelate racemase/muconate lactonizing enzyme family. Mg(2+) serves as cofactor.

Catalyzes the epimerization of D-Ala-D-Ala to D-Ala-L-Ala. Has broad substrate specificity and catalyzes the epimerization of a variety of dipeptides containing an N-terminal Ala followed by a hydrophobic or polar residue, such as Val, Ser and Met (in vitro). In Cytophaga hutchinsonii (strain ATCC 33406 / DSM 1761 / CIP 103989 / NBRC 15051 / NCIMB 9469 / D465), this protein is D-Ala-D/L-Ala epimerase (tfdD).